The chain runs to 510 residues: UDP-N-acetylmuramyl-tripeptide synthetase (510 aa).

Ser-36 is a binding site for UDP-N-acetyl-alpha-D-muramoyl-L-alanyl-D-glutamate. 113–119 (GTKGKTT) serves as a coordination point for ATP. Residues 159-160 (TT), Ser-186, and Arg-194 contribute to the UDP-N-acetyl-alpha-D-muramoyl-L-alanyl-D-glutamate site. Residue Lys-228 is modified to N6-carboxylysine.

The protein belongs to the MurCDEF family. MurE subfamily. Post-translationally, carboxylation is probably crucial for Mg(2+) binding and, consequently, for the gamma-phosphate positioning of ATP.

The protein localises to the cytoplasm. It functions in the pathway cell wall biogenesis; peptidoglycan biosynthesis. Its function is as follows. Catalyzes the addition of an amino acid to the nucleotide precursor UDP-N-acetylmuramoyl-L-alanyl-D-glutamate (UMAG) in the biosynthesis of bacterial cell-wall peptidoglycan. This Ligilactobacillus salivarius (strain UCC118) (Lactobacillus salivarius) protein is UDP-N-acetylmuramyl-tripeptide synthetase.